The primary structure comprises 245 residues: Ribonuclease PH (245 aa).

Residues Arg87 and 125–127 (GTR) contribute to the phosphate site.

Belongs to the RNase PH family. In terms of assembly, homohexameric ring arranged as a trimer of dimers.

The catalysed reaction is tRNA(n+1) + phosphate = tRNA(n) + a ribonucleoside 5'-diphosphate. Its function is as follows. Phosphorolytic 3'-5' exoribonuclease that plays an important role in tRNA 3'-end maturation. Removes nucleotide residues following the 3'-CCA terminus of tRNAs; can also add nucleotides to the ends of RNA molecules by using nucleoside diphosphates as substrates, but this may not be physiologically important. Probably plays a role in initiation of 16S rRNA degradation (leading to ribosome degradation) during starvation. This Streptomyces griseus subsp. griseus (strain JCM 4626 / CBS 651.72 / NBRC 13350 / KCC S-0626 / ISP 5235) protein is Ribonuclease PH.